A 152-amino-acid polypeptide reads, in one-letter code: Conglutin delta 1 (152 aa).

A signal peptide spans 1–22 (MAKLTILIALVAALVLVVHTSA). Cystine bridges form between Cys30-Cys101, Cys42-Cys89, Cys90-Cys137, and Cys103-Cys145.

Belongs to the 2S seed storage albumins family. In terms of assembly, heterodimer of a small chain and a large chain; disulfide-linked. In terms of tissue distribution, expressed in developing cotyledons and in the embryonic axis of germinating seeds.

It localises to the endoplasmic reticulum. This is Conglutin delta 1 from Lupinus angustifolius (Narrow-leaved blue lupine).